We begin with the raw amino-acid sequence, 475 residues long: F-box protein At3g59150 (475 aa).

Residues 12–58 (GDVISNLPNDLLCRILSYLSTKEAALTSILSKRWSNLLLSIPILDFD) form the F-box domain.

The protein is F-box protein At3g59150 of Arabidopsis thaliana (Mouse-ear cress).